Reading from the N-terminus, the 559-residue chain is DNA ligase (559 aa).

Residue Glu247 coordinates ATP. Residue Lys249 is the N6-AMP-lysine intermediate of the active site. ATP contacts are provided by Arg254, Arg269, Glu299, Phe339, Arg414, and Lys420.

The protein belongs to the ATP-dependent DNA ligase family. Mg(2+) serves as cofactor.

It carries out the reaction ATP + (deoxyribonucleotide)n-3'-hydroxyl + 5'-phospho-(deoxyribonucleotide)m = (deoxyribonucleotide)n+m + AMP + diphosphate.. The enzyme catalyses NAD(+) + (deoxyribonucleotide)n-3'-hydroxyl + 5'-phospho-(deoxyribonucleotide)m = (deoxyribonucleotide)n+m + AMP + beta-nicotinamide D-nucleotide.. Functionally, DNA ligase that seals nicks in double-stranded DNA during DNA replication, DNA recombination and DNA repair. Shows high activity with either ATP or NAD(+). This is DNA ligase from Thermococcus fumicolans.